Consider the following 172-residue polypeptide: dCTP pyrophosphatase (172 aa).

It catalyses the reaction dCTP + H2O = dCMP + diphosphate + H(+). This Enterobacteria phage LZ5 (Bacteriophage LZ5) protein is dCTP pyrophosphatase (56).